A 634-amino-acid chain; its full sequence is tRNA uridine 5-carboxymethylaminomethyl modification enzyme MnmG (634 aa).

14-19 (GGGHAG) serves as a coordination point for FAD. 279–293 (GPRYCPSIEDKVVRF) provides a ligand contact to NAD(+).

This sequence belongs to the MnmG family. In terms of assembly, homodimer. Heterotetramer of two MnmE and two MnmG subunits. The cofactor is FAD.

It is found in the cytoplasm. Its function is as follows. NAD-binding protein involved in the addition of a carboxymethylaminomethyl (cmnm) group at the wobble position (U34) of certain tRNAs, forming tRNA-cmnm(5)s(2)U34. The protein is tRNA uridine 5-carboxymethylaminomethyl modification enzyme MnmG of Xanthomonas euvesicatoria pv. vesicatoria (strain 85-10) (Xanthomonas campestris pv. vesicatoria).